Reading from the N-terminus, the 480-residue chain is MINAKKEFQQRVRNMIPGMRRVHQIHFVGIGGAGMGGIAEVLLNEGYAVTGSDIAESAVTNRLISLGAKIHFSHAASNVDNASVVVVSSAIKADNVEVVAAHEKRIPVIQRAQMLAEIMRFRHGIAVAGTHGKTTTTAMISMIYAQAGLDPTFVNGGLVKSAGTNAHLGCSRYLIAEADESDASFLHLQPMVSVVTNIEPDHMDTYHGDFDEMKRTYVNFLHNLPFYGLSVMCADDPVLLELIPQVGRPVITYGFSEEADYRIENYEQTGFQGHYSVITPAGERIDVLLNVPGKHNALNATAALAVAKEEGIENEAILAALADFQGAGRRFDQLGSFIRPNGKVMLVDDYGHHPTEVNVTIQAARKGWENKRIVMIFQPHRYSRTRDLFDDFVRVLSQVDLLIMLDVYPAGESPIAGADSRSLCRSIRNLGQVDPILVTDTAELPEIMDRVLQDGDLVLAQGAGNVSKLSRQLVELWTKA.

129-135 serves as a coordination point for ATP; it reads GTHGKTT.

This sequence belongs to the MurCDEF family.

The protein resides in the cytoplasm. It carries out the reaction UDP-N-acetyl-alpha-D-muramate + L-alanine + ATP = UDP-N-acetyl-alpha-D-muramoyl-L-alanine + ADP + phosphate + H(+). Its pathway is cell wall biogenesis; peptidoglycan biosynthesis. Its function is as follows. Cell wall formation. This Mannheimia succiniciproducens (strain KCTC 0769BP / MBEL55E) protein is UDP-N-acetylmuramate--L-alanine ligase.